The chain runs to 390 residues: 1-deoxy-D-xylulose 5-phosphate reductoisomerase (390 aa).

NADPH contacts are provided by Thr10, Gly11, Ser12, Val13, and Asn124. Lys125 contributes to the 1-deoxy-D-xylulose 5-phosphate binding site. Glu126 serves as a coordination point for NADPH. Position 150 (Asp150) interacts with Mn(2+). Ser151, Glu152, Ser181, and His204 together coordinate 1-deoxy-D-xylulose 5-phosphate. Residue Glu152 coordinates Mn(2+). An NADPH-binding site is contributed by Gly210. 1-deoxy-D-xylulose 5-phosphate-binding residues include Ser217, Asn222, Lys223, and Glu226. Mn(2+) is bound at residue Glu226.

The protein belongs to the DXR family. It depends on Mg(2+) as a cofactor. Mn(2+) is required as a cofactor.

The enzyme catalyses 2-C-methyl-D-erythritol 4-phosphate + NADP(+) = 1-deoxy-D-xylulose 5-phosphate + NADPH + H(+). The protein operates within isoprenoid biosynthesis; isopentenyl diphosphate biosynthesis via DXP pathway; isopentenyl diphosphate from 1-deoxy-D-xylulose 5-phosphate: step 1/6. Catalyzes the NADPH-dependent rearrangement and reduction of 1-deoxy-D-xylulose-5-phosphate (DXP) to 2-C-methyl-D-erythritol 4-phosphate (MEP). This is 1-deoxy-D-xylulose 5-phosphate reductoisomerase from Janthinobacterium sp. (strain Marseille) (Minibacterium massiliensis).